A 322-amino-acid chain; its full sequence is Ribokinase (322 aa).

Residues 25 to 27 (MTD), 53 to 57 (GKGAN), and E154 each bind substrate. ATP is bound by residues N199, 235-240 (TLGAEG), and T256. 2 residues coordinate K(+): D263 and T265. ATP-binding positions include 268–269 (GD) and N295. D269 serves as a coordination point for substrate. The Proton acceptor role is filled by D269. K(+)-binding residues include S301, A304, G306, and S310.

It belongs to the carbohydrate kinase PfkB family. Ribokinase subfamily. Homodimer. Requires Mg(2+) as cofactor.

Its subcellular location is the cytoplasm. It is found in the nucleus. It catalyses the reaction D-ribose + ATP = D-ribose 5-phosphate + ADP + H(+). Its pathway is carbohydrate metabolism; D-ribose degradation; D-ribose 5-phosphate from beta-D-ribopyranose: step 2/2. Its activity is regulated as follows. Activated by a monovalent cation that binds near, but not in, the active site. The most likely occupant of the site in vivo is potassium. Ion binding induces a conformational change that may alter substrate affinity. Competitively inhibited by phosphonoacetic acid, etidronate, 2-carboxethylphosphonic acid, N-(phosphonomethyl)glycine, N-(phosphonomethyl)iminodiacetic acid and clodronate. Its function is as follows. Catalyzes the phosphorylation of ribose at O-5 in a reaction requiring ATP and magnesium. The resulting D-ribose-5-phosphate can then be used either for sythesis of nucleotides, histidine, and tryptophan, or as a component of the pentose phosphate pathway. This is Ribokinase from Homo sapiens (Human).